The primary structure comprises 875 residues: Alanine--tRNA ligase (875 aa).

Residues His564, His568, Cys666, and His670 each coordinate Zn(2+).

Belongs to the class-II aminoacyl-tRNA synthetase family. Homotetramer. It depends on Zn(2+) as a cofactor.

It is found in the cytoplasm. The enzyme catalyses tRNA(Ala) + L-alanine + ATP = L-alanyl-tRNA(Ala) + AMP + diphosphate. Catalyzes the attachment of alanine to tRNA(Ala) in a two-step reaction: alanine is first activated by ATP to form Ala-AMP and then transferred to the acceptor end of tRNA(Ala). Also edits incorrectly charged Ser-tRNA(Ala) and Gly-tRNA(Ala) via its editing domain. The sequence is that of Alanine--tRNA ligase from Enterobacter sp. (strain 638).